The primary structure comprises 76 residues: Exodeoxyribonuclease 7 small subunit (76 aa).

It belongs to the XseB family. In terms of assembly, heterooligomer composed of large and small subunits.

Its subcellular location is the cytoplasm. The enzyme catalyses Exonucleolytic cleavage in either 5'- to 3'- or 3'- to 5'-direction to yield nucleoside 5'-phosphates.. Bidirectionally degrades single-stranded DNA into large acid-insoluble oligonucleotides, which are then degraded further into small acid-soluble oligonucleotides. This is Exodeoxyribonuclease 7 small subunit from Staphylococcus aureus (strain MRSA252).